A 398-amino-acid polypeptide reads, in one-letter code: E3 ubiquitin-protein ligase MARCHF11 (398 aa).

Residues 1–14 (MSDEGSKRGSRADS) are compositionally biased toward basic and acidic residues. The segment at 1–158 (MSDEGSKRGS…GSGDQRSGHQ (158 aa)) is disordered. Residues 19–31 (PPLPPPPPPPPPG) are compositionally biased toward pro residues. Composition is skewed to basic and acidic residues over residues 94–104 (EGPRRLPEVKL) and 121–130 (ACREGERRGT). The RING-CH-type zinc-finger motif lies at 158-218 (QHQHHQPICK…ELCCYRYHVT (61 aa)). Zn(2+)-binding residues include Cys166, Cys169, Cys182, Cys184, His192, Cys195, Cys208, and Cys211. Helical transmembrane passes span 241–261 (MIAV…LLWS) and 274–294 (ILFQ…IGLI). A YXXL motif motif is present at residues 367–370 (YVLL). A PDZ-binding motif is present at residues 395 to 398 (VTSV).

As to quaternary structure, interacts (YXXL motif) with AP1M1. Interacts (via PDZ-binding motif) with LIN7A. Interacts with unidentified fucose glycoproteins. Predominantly expressed in testis. Present in early developing spermatids. Not present in spermatogonia, spermatocytes or somatic cells (i.e. peritubular, Leydig, and Sertoli cells). Present in early round spermatids at step 4, remains until step 11, then it decreases at steps 12-15, and diminishes after step 16 (at protein level). Also expressed at lower level in brain.

The protein resides in the cytoplasmic vesicle membrane. It carries out the reaction S-ubiquitinyl-[E2 ubiquitin-conjugating enzyme]-L-cysteine + [acceptor protein]-L-lysine = [E2 ubiquitin-conjugating enzyme]-L-cysteine + N(6)-ubiquitinyl-[acceptor protein]-L-lysine.. The protein operates within protein modification; protein ubiquitination. Its function is as follows. E3 ubiquitin-protein ligase that mediates polyubiquitination of CD4. E3 ubiquitin ligases accept ubiquitin from an E2 ubiquitin-conjugating enzyme in the form of a thioester and then directly transfer the ubiquitin to targeted substrates. May play a role in ubuquitin-dependent protein sorting in developmenting spermatids. The protein is E3 ubiquitin-protein ligase MARCHF11 (Marchf11) of Rattus norvegicus (Rat).